Consider the following 269-residue polypeptide: Zinc import ATP-binding protein ZnuC (269 aa).

The region spanning 6–221 (VRLTQVGVSF…PAFVELFGQD (216 aa)) is the ABC transporter domain. 38–45 (GPNGAGKT) serves as a coordination point for ATP.

The protein belongs to the ABC transporter superfamily. Zinc importer (TC 3.A.1.15.5) family. In terms of assembly, the complex is composed of two ATP-binding proteins (ZnuC), two transmembrane proteins (ZnuB) and a solute-binding protein (ZnuA).

The protein localises to the cell inner membrane. The catalysed reaction is Zn(2+)(out) + ATP(in) + H2O(in) = Zn(2+)(in) + ADP(in) + phosphate(in) + H(+)(in). Its function is as follows. Part of the ABC transporter complex ZnuABC involved in zinc import. Responsible for energy coupling to the transport system. In Pseudomonas aeruginosa (strain UCBPP-PA14), this protein is Zinc import ATP-binding protein ZnuC.